A 285-amino-acid chain; its full sequence is 4-diphosphocytidyl-2-C-methyl-D-erythritol kinase (285 aa).

Residue Lys-12 is part of the active site. Residue Pro-95–Ser-105 participates in ATP binding. The active site involves Asp-137.

The protein belongs to the GHMP kinase family. IspE subfamily.

The catalysed reaction is 4-CDP-2-C-methyl-D-erythritol + ATP = 4-CDP-2-C-methyl-D-erythritol 2-phosphate + ADP + H(+). Its pathway is isoprenoid biosynthesis; isopentenyl diphosphate biosynthesis via DXP pathway; isopentenyl diphosphate from 1-deoxy-D-xylulose 5-phosphate: step 3/6. Its function is as follows. Catalyzes the phosphorylation of the position 2 hydroxy group of 4-diphosphocytidyl-2C-methyl-D-erythritol. This is 4-diphosphocytidyl-2-C-methyl-D-erythritol kinase from Actinobacillus pleuropneumoniae serotype 3 (strain JL03).